The chain runs to 320 residues: tRNA dimethylallyltransferase (320 aa).

16–23 (GPTASGKT) is an ATP binding site. 18-23 (TASGKT) is a binding site for substrate. Interaction with substrate tRNA stretches follow at residues 41-44 (DSAL), 165-169 (QRIQR), and 247-252 (RCVGYR).

Belongs to the IPP transferase family. Monomer. Mg(2+) is required as a cofactor.

It carries out the reaction adenosine(37) in tRNA + dimethylallyl diphosphate = N(6)-dimethylallyladenosine(37) in tRNA + diphosphate. In terms of biological role, catalyzes the transfer of a dimethylallyl group onto the adenine at position 37 in tRNAs that read codons beginning with uridine, leading to the formation of N6-(dimethylallyl)adenosine (i(6)A). This chain is tRNA dimethylallyltransferase, found in Azoarcus sp. (strain BH72).